The chain runs to 971 residues: Translation initiation factor IF-2 (971 aa).

The span at 48–63 (DHLRKSHGATDGDKRK) shows a compositional bias: basic and acidic residues. Disordered regions lie at residues 48 to 86 (DHLRKSHGATDGDKRKITLTRKHTSEIKQSDATGKARTI) and 101 to 381 (DVAE…STFQ). Residues 105–114 (GADQGQAQVA) are compositionally biased toward low complexity. A compositionally biased stretch (basic and acidic residues) spans 121 to 181 (ELKRREEEAR…EEEAATKRAA (61 aa)). Low complexity predominate over residues 182-203 (AEAAAAQQQAAAQQAAAEQEAT). The span at 210–261 (DEARAAAERAAQREAAKKAEDAAREAADKARAEQEEISKRRAAAEAEARAIR) shows a compositional bias: basic and acidic residues. Residues 277 to 286 (PPKPVEPPKP) show a composition bias toward pro residues. The segment covering 304 to 326 (ARPAVKKPAGAAAPATTQAPAGA) has biased composition (low complexity). Residues 356 to 369 (SSGGVDRGWRGGPK) show a composition bias toward gly residues. Positions 471-640 (PRPPVVTVMG…LLQAEVLELK (170 aa)) constitute a tr-type G domain. The segment at 480–487 (GHVDHGKT) is G1. Residue 480 to 487 (GHVDHGKT) participates in GTP binding. Residues 505-509 (GITQH) are G2. The tract at residues 526 to 529 (DTPG) is G3. GTP contacts are provided by residues 526 to 530 (DTPGH) and 580 to 583 (NKID). Residues 580 to 583 (NKID) are G4. Residues 616-618 (SAK) form a G5 region.

It belongs to the TRAFAC class translation factor GTPase superfamily. Classic translation factor GTPase family. IF-2 subfamily.

It localises to the cytoplasm. In terms of biological role, one of the essential components for the initiation of protein synthesis. Protects formylmethionyl-tRNA from spontaneous hydrolysis and promotes its binding to the 30S ribosomal subunits. Also involved in the hydrolysis of GTP during the formation of the 70S ribosomal complex. The chain is Translation initiation factor IF-2 from Burkholderia orbicola (strain MC0-3).